The primary structure comprises 408 residues: NADH-quinone oxidoreductase subunit D (408 aa).

The protein belongs to the complex I 49 kDa subunit family. In terms of assembly, NDH-1 is composed of 14 different subunits. Subunits NuoB, C, D, E, F, and G constitute the peripheral sector of the complex.

It localises to the cell inner membrane. It carries out the reaction a quinone + NADH + 5 H(+)(in) = a quinol + NAD(+) + 4 H(+)(out). Its function is as follows. NDH-1 shuttles electrons from NADH, via FMN and iron-sulfur (Fe-S) centers, to quinones in the respiratory chain. The immediate electron acceptor for the enzyme in this species is believed to be ubiquinone. Couples the redox reaction to proton translocation (for every two electrons transferred, four hydrogen ions are translocated across the cytoplasmic membrane), and thus conserves the redox energy in a proton gradient. This Campylobacter jejuni subsp. jejuni serotype O:6 (strain 81116 / NCTC 11828) protein is NADH-quinone oxidoreductase subunit D.